Here is a 379-residue protein sequence, read N- to C-terminus: Cytochrome b (379 aa).

4 consecutive transmembrane segments (helical) span residues 33–53 (FGSL…FLAM), 77–98 (WLIR…FIHV), 113–133 (WNIG…GYVL), and 178–198 (FFAF…VHLL). Residues His-83 and His-97 each coordinate heme b. The heme b site is built by His-182 and His-196. His-201 is an a ubiquinone binding site. 4 consecutive transmembrane segments (helical) span residues 226 to 246 (TKDL…ALFF), 288 to 308 (LGGV…PLLN), 320 to 340 (VTQI…WIGG), and 347 to 367 (FTTI…ILIP).

Belongs to the cytochrome b family. The cytochrome bc1 complex contains 11 subunits: 3 respiratory subunits (MT-CYB, CYC1 and UQCRFS1), 2 core proteins (UQCRC1 and UQCRC2) and 6 low-molecular weight proteins (UQCRH/QCR6, UQCRB/QCR7, UQCRQ/QCR8, UQCR10/QCR9, UQCR11/QCR10 and a cleavage product of UQCRFS1). This cytochrome bc1 complex then forms a dimer. Requires heme b as cofactor.

Its subcellular location is the mitochondrion inner membrane. Component of the ubiquinol-cytochrome c reductase complex (complex III or cytochrome b-c1 complex) that is part of the mitochondrial respiratory chain. The b-c1 complex mediates electron transfer from ubiquinol to cytochrome c. Contributes to the generation of a proton gradient across the mitochondrial membrane that is then used for ATP synthesis. The chain is Cytochrome b (MT-CYB) from Akodon reigi (Reig's grass mouse).